A 277-amino-acid polypeptide reads, in one-letter code: 3-methyl-2-oxobutanoate hydroxymethyltransferase (277 aa).

Residues D43 and D82 each coordinate Mg(2+). 3-methyl-2-oxobutanoate contacts are provided by residues 43–44 (DS), D82, and K112. E114 contributes to the Mg(2+) binding site. Catalysis depends on E181, which acts as the Proton acceptor.

This sequence belongs to the PanB family. Homodecamer; pentamer of dimers. Requires Mg(2+) as cofactor.

The protein localises to the cytoplasm. It carries out the reaction 3-methyl-2-oxobutanoate + (6R)-5,10-methylene-5,6,7,8-tetrahydrofolate + H2O = 2-dehydropantoate + (6S)-5,6,7,8-tetrahydrofolate. The protein operates within cofactor biosynthesis; (R)-pantothenate biosynthesis; (R)-pantoate from 3-methyl-2-oxobutanoate: step 1/2. Its function is as follows. Catalyzes the reversible reaction in which hydroxymethyl group from 5,10-methylenetetrahydrofolate is transferred onto alpha-ketoisovalerate to form ketopantoate. This Bacillus subtilis (strain 168) protein is 3-methyl-2-oxobutanoate hydroxymethyltransferase.